The primary structure comprises 576 residues: Aspartate--tRNA ligase (576 aa).

E173 serves as a coordination point for L-aspartate. The tract at residues 197–200 (QLFK) is aspartate. R219 is a binding site for L-aspartate. Residues 219-221 (RDE) and Q228 each bind ATP. H438 provides a ligand contact to L-aspartate. E470 is a binding site for ATP. R477 provides a ligand contact to L-aspartate. 522-525 (GLDR) is a binding site for ATP.

Belongs to the class-II aminoacyl-tRNA synthetase family. Type 1 subfamily. Homodimer.

It is found in the cytoplasm. The catalysed reaction is tRNA(Asp) + L-aspartate + ATP = L-aspartyl-tRNA(Asp) + AMP + diphosphate. In terms of biological role, catalyzes the attachment of L-aspartate to tRNA(Asp) in a two-step reaction: L-aspartate is first activated by ATP to form Asp-AMP and then transferred to the acceptor end of tRNA(Asp). The protein is Aspartate--tRNA ligase of Aster yellows witches'-broom phytoplasma (strain AYWB).